We begin with the raw amino-acid sequence, 131 residues long: Arsenate reductase (131 aa).

Residues Cys-10, Cys-82, and Cys-89 each act as nucleophile in the active site. Cystine bridges form between Cys-10–Cys-82 and Cys-82–Cys-89.

Belongs to the low molecular weight phosphotyrosine protein phosphatase family. Thioredoxin-coupled ArsC subfamily.

It is found in the cytoplasm. The catalysed reaction is arsenate + [thioredoxin]-dithiol + H(+) = arsenite + [thioredoxin]-disulfide + H2O. Functionally, catalyzes the reduction of arsenate [As(V)] to arsenite [As(III)]. This is Arsenate reductase from Staphylococcus aureus (strain N315).